Consider the following 189-residue polypeptide: Low affinity inorganic phosphate transporter 2 (189 aa).

Topologically, residues 1–55 (TARYTALVAKDAKRAAADMGKVLHVEIDPEDAKVERMAKDESNQFGLFSWEFVRR) are cytoplasmic. Residues 56-76 (HGLHLFGTCSTWFLLDIAFYS) traverse the membrane as a helical segment. The Extracellular segment spans residues 77–111 (QNLFQKDVFTAIGWIPPAKTMNAVQEVYKIARAQT). The chain crosses the membrane as a helical span at residues 112 to 132 (LIALCSTVPGYWFTVAFIDII). The Cytoplasmic segment spans residues 133–134 (GR). The helical transmembrane segment at 135–155 (FAIQLMGFFFMTVFMFAIAIP) threads the bilayer. At 156–165 (YHHWTLQENR) the chain is on the extracellular side. Residues 166–186 (IGFVIMYSLTFFFANFGPNAT) form a helical membrane-spanning segment. Topologically, residues 187–189 (TFV) are cytoplasmic.

It belongs to the major facilitator superfamily. Phosphate:H(+) symporter (TC 2.A.1.9) family.

It localises to the cell membrane. It carries out the reaction phosphate(in) + H(+)(in) = phosphate(out) + H(+)(out). Its function is as follows. Low-affinity transporter for external inorganic phosphate (Pi). The polypeptide is Low affinity inorganic phosphate transporter 2 (Petunia hybrida (Petunia)).